Reading from the N-terminus, the 426-residue chain is Serine hydroxymethyltransferase (426 aa).

Residues leucine 121 and 125–127 (GHL) each bind (6S)-5,6,7,8-tetrahydrofolate. Lysine 230 carries the N6-(pyridoxal phosphate)lysine modification. 354-356 (SPF) serves as a coordination point for (6S)-5,6,7,8-tetrahydrofolate.

It belongs to the SHMT family. Homodimer. Pyridoxal 5'-phosphate is required as a cofactor.

The protein localises to the cytoplasm. The enzyme catalyses (6R)-5,10-methylene-5,6,7,8-tetrahydrofolate + glycine + H2O = (6S)-5,6,7,8-tetrahydrofolate + L-serine. It participates in one-carbon metabolism; tetrahydrofolate interconversion. The protein operates within amino-acid biosynthesis; glycine biosynthesis; glycine from L-serine: step 1/1. In terms of biological role, catalyzes the reversible interconversion of serine and glycine with tetrahydrofolate (THF) serving as the one-carbon carrier. This reaction serves as the major source of one-carbon groups required for the biosynthesis of purines, thymidylate, methionine, and other important biomolecules. Also exhibits THF-independent aldolase activity toward beta-hydroxyamino acids, producing glycine and aldehydes, via a retro-aldol mechanism. This is Serine hydroxymethyltransferase from Acaryochloris marina (strain MBIC 11017).